A 197-amino-acid chain; its full sequence is Inner membrane-spanning protein YciB (197 aa).

The next 5 membrane-spanning stretches (helical) occupy residues 22-42 (IYSA…YHWF), 48-68 (PSMM…TLIF), 76-96 (WKPS…HLIG), 121-141 (AAWV…AYTF), and 144-164 (EIWV…FLIG).

It belongs to the YciB family.

Its subcellular location is the cell inner membrane. Its function is as follows. Plays a role in cell envelope biogenesis, maintenance of cell envelope integrity and membrane homeostasis. This is Inner membrane-spanning protein YciB from Magnetococcus marinus (strain ATCC BAA-1437 / JCM 17883 / MC-1).